The chain runs to 143 residues: Large ribosomal subunit protein uL11 (143 aa).

It belongs to the universal ribosomal protein uL11 family. As to quaternary structure, part of the ribosomal stalk of the 50S ribosomal subunit. Interacts with L10 and the large rRNA to form the base of the stalk. L10 forms an elongated spine to which L12 dimers bind in a sequential fashion forming a multimeric L10(L12)X complex. One or more lysine residues are methylated.

Its function is as follows. Forms part of the ribosomal stalk which helps the ribosome interact with GTP-bound translation factors. This chain is Large ribosomal subunit protein uL11, found in Zymomonas mobilis subsp. mobilis (strain ATCC 31821 / ZM4 / CP4).